We begin with the raw amino-acid sequence, 132 residues long: DNA-directed RNA polymerase subunit Rpo8 (132 aa).

It belongs to the archaeal Rpo8 RNA polymerase subunit family. In terms of assembly, part of the 13-subunit RNA polymerase complex.

The protein localises to the cytoplasm. The enzyme catalyses RNA(n) + a ribonucleoside 5'-triphosphate = RNA(n+1) + diphosphate. In terms of biological role, DNA-dependent RNA polymerase (RNAP) catalyzes the transcription of DNA into RNA using the four ribonucleoside triphosphates as substrates. This is DNA-directed RNA polymerase subunit Rpo8 from Saccharolobus solfataricus (strain ATCC 35092 / DSM 1617 / JCM 11322 / P2) (Sulfolobus solfataricus).